The following is a 94-amino-acid chain: UPF0768 protein YBL029C-A (94 aa).

Belongs to the UPF0768 family.

Its subcellular location is the cell membrane. The sequence is that of UPF0768 protein YBL029C-A from Saccharomyces cerevisiae (strain ATCC 204508 / S288c) (Baker's yeast).